A 342-amino-acid chain; its full sequence is Nucleoid-associated protein Shewmr7_2293 (342 aa).

The protein belongs to the YejK family.

It localises to the cytoplasm. The protein resides in the nucleoid. This chain is Nucleoid-associated protein Shewmr7_2293, found in Shewanella sp. (strain MR-7).